Here is a 285-residue protein sequence, read N- to C-terminus: 4-diphosphocytidyl-2-C-methyl-D-erythritol kinase (285 aa).

Residue lysine 12 is part of the active site. Residue 95-105 (PMGGGVGGGSS) coordinates ATP. Aspartate 137 is an active-site residue.

Belongs to the GHMP kinase family. IspE subfamily.

It carries out the reaction 4-CDP-2-C-methyl-D-erythritol + ATP = 4-CDP-2-C-methyl-D-erythritol 2-phosphate + ADP + H(+). Its pathway is isoprenoid biosynthesis; isopentenyl diphosphate biosynthesis via DXP pathway; isopentenyl diphosphate from 1-deoxy-D-xylulose 5-phosphate: step 3/6. Functionally, catalyzes the phosphorylation of the position 2 hydroxy group of 4-diphosphocytidyl-2C-methyl-D-erythritol. This Actinobacillus pleuropneumoniae serotype 5b (strain L20) protein is 4-diphosphocytidyl-2-C-methyl-D-erythritol kinase.